A 92-amino-acid polypeptide reads, in one-letter code: Signal recognition particle 19 kDa protein (92 aa).

It belongs to the SRP19 family. As to quaternary structure, part of the signal recognition particle protein translocation system, which is composed of SRP and FtsY. Archaeal SRP consists of a 7S RNA molecule of 300 nucleotides and two protein subunits: SRP54 and SRP19.

It localises to the cytoplasm. Involved in targeting and insertion of nascent membrane proteins into the cytoplasmic membrane. Binds directly to 7S RNA and mediates binding of the 54 kDa subunit of the SRP. The sequence is that of Signal recognition particle 19 kDa protein from Haloarcula marismortui (strain ATCC 43049 / DSM 3752 / JCM 8966 / VKM B-1809) (Halobacterium marismortui).